Consider the following 401-residue polypeptide: Imidazolonepropionase (401 aa).

Fe(3+) contacts are provided by His-70 and His-72. His-70 and His-72 together coordinate Zn(2+). Arg-79, Tyr-142, and His-175 together coordinate 4-imidazolone-5-propanoate. Tyr-142 provides a ligand contact to N-formimidoyl-L-glutamate. His-238 is a binding site for Fe(3+). His-238 contributes to the Zn(2+) binding site. Gln-241 lines the 4-imidazolone-5-propanoate pocket. Asp-313 lines the Fe(3+) pocket. Asp-313 contributes to the Zn(2+) binding site. Residues Asn-315 and Gly-317 each coordinate N-formimidoyl-L-glutamate. Thr-318 serves as a coordination point for 4-imidazolone-5-propanoate.

Belongs to the metallo-dependent hydrolases superfamily. HutI family. Zn(2+) serves as cofactor. Requires Fe(3+) as cofactor.

The protein resides in the cytoplasm. The enzyme catalyses 4-imidazolone-5-propanoate + H2O = N-formimidoyl-L-glutamate. The protein operates within amino-acid degradation; L-histidine degradation into L-glutamate; N-formimidoyl-L-glutamate from L-histidine: step 3/3. Catalyzes the hydrolytic cleavage of the carbon-nitrogen bond in imidazolone-5-propanoate to yield N-formimidoyl-L-glutamate. It is the third step in the universal histidine degradation pathway. This chain is Imidazolonepropionase, found in Xanthomonas oryzae pv. oryzae (strain MAFF 311018).